Here is a 390-residue protein sequence, read N- to C-terminus: F-box/kelch-repeat protein At3g06570 (390 aa).

The F-box domain occupies 23–69; sequence SASFQSLPDDLILSIVARVPRLYHRTVSLVCKSFRSLLVSPELYKAR. Kelch repeat units lie at residues 140 to 183, 185 to 234, and 236 to 281; these read DIYN…VLDR, IFVV…CRTA, and IDGK…QIHN.

The protein is F-box/kelch-repeat protein At3g06570 of Arabidopsis thaliana (Mouse-ear cress).